Consider the following 453-residue polypeptide: Exopolyphosphatase PRUNE1 (453 aa).

The residue at position 1 (Met1) is an N-acetylmethionine. Mn(2+)-binding residues include Asp28, Asp30, Asp106, and Asp179. Residues Asp106–His108 carry the DHH motif motif. Positions Ser393–Pro420 are essential for homodimerization. The interval Ser396–Cys419 is disordered. Ser399 bears the Phosphoserine mark. Residue Thr410 is modified to Phosphothreonine. Ser414 carries the post-translational modification Phosphoserine.

Belongs to the PPase class C family. Prune subfamily. Homooligomer. Able to homodimerize via its C-terminal domain. Interacts with NME1. Interacts with GSK3; at focal adhesion complexes where paxillin and vinculin are colocalized. The cofactor is Mn(2+).

It is found in the cytoplasm. The protein resides in the nucleus. The protein localises to the cell junction. It localises to the focal adhesion. It carries out the reaction diphosphate + H2O = 2 phosphate + H(+). With respect to regulation, activated by magnesium ions and inhibited by manganese ions. Inhibited by dipyridamole, moderately sensitive to IBMX and inhibited by vinpocetine. In terms of biological role, phosphodiesterase (PDE) that has higher activity toward cAMP than cGMP, as substrate. Plays a role in cell proliferation, is able to induce cell motility and acts as a negative regulator of NME1. The polypeptide is Exopolyphosphatase PRUNE1 (PRUNE1) (Bos taurus (Bovine)).